The chain runs to 715 residues: Palmitoyltransferase ZDHHC5 (715 aa).

At 1 to 13 (MPAESGKRFKPSK) the chain is on the cytoplasmic side. Residues 14-34 (YVPVSAAAIFLVGATTLFFAF) form a helical membrane-spanning segment. Residues 35-52 (TCPGLSLNVSPAVPIYNA) lie on the Extracellular side of the membrane. The helical transmembrane segment at 53 to 73 (IMFLFVLANFSMATFMDPGIF) threads the bilayer. Topologically, residues 74–148 (PRAEEDEDKE…NCIGRRNYRY (75 aa)) are cytoplasmic. The residue at position 91 (Y91) is a Phosphotyrosine. Residues 104-154 (KWCATCRFYRPPRCSHCSVCDNCVEEFDHHCPWVNNCIGRRNYRYFFLFLL) form the DHHC domain. C134 (S-palmitoyl cysteine intermediate) is an active-site residue. A helical membrane pass occupies residues 149-169 (FFLFLLSLTAHIMGVFGFGLL). At 170 to 191 (YVLYHIEELSGVRTAVTMAVMC) the chain is on the extracellular side. A helical transmembrane segment spans residues 192–212 (VAGLFFIPVAGLTGFHVVLVA). The Cytoplasmic portion of the chain corresponds to 213-715 (RGRTTNEQVT…VGGTTYEISV (503 aa)). S247 carries the post-translational modification Phosphoserine. Residues 289-715 (GELRRTKSKG…VGGTTYEISV (427 aa)) form a disordered region. T294 carries the phosphothreonine modification. Phosphoserine occurs at positions 296 and 299. Position 303 is a phosphothreonine (T303). Phosphoserine is present on S345. Phosphothreonine occurs at positions 348 and 350. A compositionally biased stretch (low complexity) spans 359 to 373 (SSSSTSAAMPHSSSA). 4 positions are modified to phosphoserine: S380, S398, S406, and S409. Phosphothreonine is present on T411. S415, S425, S429, and S432 each carry phosphoserine. The span at 422-432 (SSGSRSSSLKS) shows a compositional bias: low complexity. T436 is subject to Phosphothreonine. A compositionally biased stretch (polar residues) spans 442–478 (QLQSIRSEGTTSTSYKSLANQTRNGSLSYDSLLTPSD). A phosphoserine mark is found at S529 and S554. Residues 581-597 (PRTSSSSDDSKRSPLSK) are compositionally biased toward low complexity. R617 is modified (omega-N-methylarginine). A Phosphoserine modification is found at S621. T659 carries the post-translational modification Phosphothreonine. Over residues 666–677 (LKTTYSKSNGQP) the composition is skewed to polar residues. Residues S684 and S694 each carry the phosphoserine modification. R697 is modified (omega-N-methylarginine).

Belongs to the DHHC palmitoyltransferase family. ERF2/ZDHHC9 subfamily. In terms of processing, phosphorylation regulates association with endocytic proteins and its subcellular localization. Phosphorylation by LYN during fatty acid uptake leads to inactivation of the activity. Autopalmitoylated. Palmitoylation of the C-terminal tail regulates stimulation-dependent plasma membrane motility. In terms of tissue distribution, highly enriched in brain, detectable in liver and heart, and undetectable in most other tissues.

The protein resides in the cell membrane. The enzyme catalyses L-cysteinyl-[protein] + hexadecanoyl-CoA = S-hexadecanoyl-L-cysteinyl-[protein] + CoA. Functionally, palmitoyltransferase that catalyzes the addition of palmitate onto various protein substrates such as CTNND2, CD36, GSDMD, NLRP3, NOD1, NOD2, STAT3 and S1PR1 thus plays a role in various biological processes including cell adhesion, inflammation, fatty acid uptake, bacterial sensing or cardiac functions. Plays an important role in the regulation of synapse efficacy by mediating palmitoylation of delta-catenin/CTNND2, thereby increasing synaptic delivery and surface stabilization of alpha-amino-3-hydroxy-5-methyl-4-isoxazole propionic acid receptors (AMPARs). Under basal conditions, remains at the synaptic membrane through FYN-mediated phosphorylation that prevents association with endocytic proteins. Neuronal activity enhances the internalization and trafficking of DHHC5 from spines to dendritic shafts where it palmitoylates delta-catenin/CTNND2. Regulates cell adhesion at the plasma membrane by palmitoylating GOLGA7B and DSG2. Plays a role in innate immune response by mediating the palmitoylation of NOD1 and NOD2 and their proper recruitment to the bacterial entry site and phagosomes. Also participates in fatty acid uptake by palmitoylating CD36 and thereby targeting it to the plasma membrane. Upon binding of fatty acids to CD36, gets phosphorylated by LYN leading to inactivation and subsequent CD36 caveolar endocytosis. Controls oligodendrocyte development by catalyzing STAT3 palmitoylation. Acts as a regulator of inflammatory response by mediating palmitoylation of NLRP3 and GSDMD. Palmitoylates NLRP3 to promote inflammasome assembly and activation. Activates pyroptosis by catalyzing palmitoylation of gasdermin-D (GSDMD), thereby promoting membrane translocation and pore formation of GSDMD. The protein is Palmitoyltransferase ZDHHC5 (Zdhhc5) of Mus musculus (Mouse).